Consider the following 300-residue polypeptide: Tyrosine recombinase XerC (300 aa).

The Core-binding (CB) domain maps to 1–86 (MESVLDAFDQ…AVKTFTAWAV (86 aa)). A Tyr recombinase domain is found at 107–294 (TLPAVLRQDQ…TVARLRAVHD (188 aa)). Residues R151, K175, H246, R249, and H272 contribute to the active site. The active-site O-(3'-phospho-DNA)-tyrosine intermediate is the Y281.

The protein belongs to the 'phage' integrase family. XerC subfamily. As to quaternary structure, forms a cyclic heterotetrameric complex composed of two molecules of XerC and two molecules of XerD.

The protein resides in the cytoplasm. Its function is as follows. Site-specific tyrosine recombinase, which acts by catalyzing the cutting and rejoining of the recombining DNA molecules. The XerC-XerD complex is essential to convert dimers of the bacterial chromosome into monomers to permit their segregation at cell division. It also contributes to the segregational stability of plasmids. The sequence is that of Tyrosine recombinase XerC from Mycobacterium sp. (strain JLS).